Here is a 688-residue protein sequence, read N- to C-terminus: Sodium channel and clathrin linker 1 (688 aa).

Ala-2 is modified (N-acetylalanine). Coiled-coil stretches lie at residues 59–108 (LIAE…AVEK) and 152–673 (QTAS…SVIT). Ser-681 bears the Phosphoserine mark.

As to quaternary structure, interacts with SCN10A and clathrin. Identified in a complex containing SCN10A, clathrin and SCLT1.

It is found in the cytoplasm. The protein localises to the cytoskeleton. It localises to the microtubule organizing center. Its subcellular location is the centrosome. The protein resides in the centriole. In terms of biological role, adapter protein that links SCN10A to clathrin. Regulates SCN10A channel activity, possibly by promoting channel internalization. This chain is Sodium channel and clathrin linker 1 (Sclt1), found in Mus musculus (Mouse).